A 298-amino-acid polypeptide reads, in one-letter code: Elongation factor Ts (298 aa).

An involved in Mg(2+) ion dislocation from EF-Tu region spans residues 79-82 (TDFV).

It belongs to the EF-Ts family.

It localises to the cytoplasm. Its function is as follows. Associates with the EF-Tu.GDP complex and induces the exchange of GDP to GTP. It remains bound to the aminoacyl-tRNA.EF-Tu.GTP complex up to the GTP hydrolysis stage on the ribosome. In Cereibacter sphaeroides (strain ATCC 17029 / ATH 2.4.9) (Rhodobacter sphaeroides), this protein is Elongation factor Ts.